Reading from the N-terminus, the 180-residue chain is Large ribosomal subunit protein uL6 (180 aa).

The protein belongs to the universal ribosomal protein uL6 family. In terms of assembly, part of the 50S ribosomal subunit.

Its function is as follows. This protein binds to the 23S rRNA, and is important in its secondary structure. It is located near the subunit interface in the base of the L7/L12 stalk, and near the tRNA binding site of the peptidyltransferase center. The chain is Large ribosomal subunit protein uL6 from Flavobacterium johnsoniae (strain ATCC 17061 / DSM 2064 / JCM 8514 / BCRC 14874 / CCUG 350202 / NBRC 14942 / NCIMB 11054 / UW101) (Cytophaga johnsonae).